Consider the following 105-residue polypeptide: UPF0145 protein lpp0255 (105 aa).

The protein belongs to the UPF0145 family.

In Legionella pneumophila (strain Paris), this protein is UPF0145 protein lpp0255.